The sequence spans 402 residues: Probable 2,3-bisphosphoglycerate-independent phosphoglycerate mutase (402 aa).

It belongs to the BPG-independent phosphoglycerate mutase family. A-PGAM subfamily.

The enzyme catalyses (2R)-2-phosphoglycerate = (2R)-3-phosphoglycerate. It functions in the pathway carbohydrate degradation; glycolysis; pyruvate from D-glyceraldehyde 3-phosphate: step 3/5. In terms of biological role, catalyzes the interconversion of 2-phosphoglycerate and 3-phosphoglycerate. The protein is Probable 2,3-bisphosphoglycerate-independent phosphoglycerate mutase of Thermosipho melanesiensis (strain DSM 12029 / CIP 104789 / BI429).